A 216-amino-acid polypeptide reads, in one-letter code: Cytidylate kinase (216 aa).

10-18 (GPAAAGKST) contributes to the ATP binding site.

Belongs to the cytidylate kinase family. Type 1 subfamily.

It localises to the cytoplasm. The catalysed reaction is CMP + ATP = CDP + ADP. It carries out the reaction dCMP + ATP = dCDP + ADP. This chain is Cytidylate kinase, found in Macrococcus caseolyticus (strain JCSC5402) (Macrococcoides caseolyticum).